The sequence spans 277 residues: 3-methyl-2-oxobutanoate hydroxymethyltransferase (277 aa).

Mg(2+) contacts are provided by Asp-54 and Asp-93. Residues 54 to 55 (DS), Asp-93, and Lys-122 contribute to the 3-methyl-2-oxobutanoate site. Residue Glu-124 coordinates Mg(2+). The Proton acceptor role is filled by Glu-191.

Belongs to the PanB family. Homodecamer; pentamer of dimers. Mg(2+) is required as a cofactor.

The protein resides in the cytoplasm. It carries out the reaction 3-methyl-2-oxobutanoate + (6R)-5,10-methylene-5,6,7,8-tetrahydrofolate + H2O = 2-dehydropantoate + (6S)-5,6,7,8-tetrahydrofolate. Its pathway is cofactor biosynthesis; (R)-pantothenate biosynthesis; (R)-pantoate from 3-methyl-2-oxobutanoate: step 1/2. Functionally, catalyzes the reversible reaction in which hydroxymethyl group from 5,10-methylenetetrahydrofolate is transferred onto alpha-ketoisovalerate to form ketopantoate. The protein is 3-methyl-2-oxobutanoate hydroxymethyltransferase of Alkalilimnicola ehrlichii (strain ATCC BAA-1101 / DSM 17681 / MLHE-1).